Consider the following 120-residue polypeptide: UPF0344 protein lmo2265 (120 aa).

4 helical membrane passes run 3-23 (GYIH…ALLI), 33-53 (MLQM…IMMV), 62-82 (ILAI…EMLL), and 92-112 (GMFL…GFYL).

It belongs to the UPF0344 family.

Its subcellular location is the cell membrane. The sequence is that of UPF0344 protein lmo2265 from Listeria monocytogenes serovar 1/2a (strain ATCC BAA-679 / EGD-e).